The primary structure comprises 407 residues: 3-oxoacyl-[acyl-carrier-protein] synthase 1 (407 aa).

Residues 1-405 (MKRVVITGLG…GTNVSLIIKK (405 aa)) enclose the Ketosynthase family 3 (KS3) domain. Catalysis depends on for beta-ketoacyl synthase activity residues Cys164, His299, and His335.

Belongs to the thiolase-like superfamily. Beta-ketoacyl-ACP synthases family. As to quaternary structure, homodimer.

Its subcellular location is the cytoplasm. It carries out the reaction a fatty acyl-[ACP] + malonyl-[ACP] + H(+) = a 3-oxoacyl-[ACP] + holo-[ACP] + CO2. The catalysed reaction is (3Z)-decenoyl-[ACP] + malonyl-[ACP] + H(+) = 3-oxo-(5Z)-dodecenoyl-[ACP] + holo-[ACP] + CO2. It participates in lipid metabolism; fatty acid biosynthesis. Involved in the type II fatty acid elongation cycle. Catalyzes the elongation of a wide range of acyl-ACP by the addition of two carbons from malonyl-ACP to an acyl acceptor. Can also use unsaturated fatty acids. Catalyzes a key reaction in unsaturated fatty acid (UFA) synthesis, the elongation of the cis-3-decenoyl-ACP produced by FabA. The protein is 3-oxoacyl-[acyl-carrier-protein] synthase 1 (fabB) of Buchnera aphidicola subsp. Baizongia pistaciae (strain Bp).